A 297-amino-acid chain; its full sequence is Adrenocorticotropic hormone receptor (297 aa).

Topologically, residues 1 to 23 (MKHIITPYEHTNDTARNNSDCPD) are extracellular. N-linked (GlcNAc...) asparagine glycans are attached at residues Asn12 and Asn17. 2 disulfides stabilise this stretch: Cys21/Cys253 and Cys245/Cys251. Residues 24-49 (VVLPEEIFFTISIIGVLENLIVLLAV) traverse the membrane as a helical segment. Over 50 to 58 (VKNKNLQCP) the chain is Cytoplasmic. A helical transmembrane segment spans residues 59-79 (MYFFICSLAISDMLGSLYKIL). Topologically, residues 80–104 (ENILIMFRNRGYLQPRGNFESTADD) are extracellular. A helical membrane pass occupies residues 105 to 126 (IIDCMFILSLLGSIFSLSVIAA). Topologically, residues 127–147 (DRYITIFHALQYHSIVTMRRT) are cytoplasmic. A helical membrane pass occupies residues 148–168 (IITLTVIWIFCTGSGIAMVIF). At 169-180 (SHHVPTVLTFTS) the chain is on the extracellular side. A helical transmembrane segment spans residues 181-199 (LFPLMLVFILCLYIHMFLL). The Cytoplasmic segment spans residues 200 to 217 (ARSHARKISTLPRANMKG). A helical membrane pass occupies residues 218–244 (AITLTILLGVFIFCWAPFILHVLLMTF). At 245–256 (CPNNPYCVCYMS) the chain is on the extracellular side. The helical transmembrane segment at 257–278 (LFQINGMLIMCNAVIDPFIYAF) threads the bilayer. At 279 to 297 (RSPELRDAFKKMFSCHRYQ) the chain is on the cytoplasmic side. Cys293 is lipidated: S-palmitoyl cysteine.

Belongs to the G-protein coupled receptor 1 family. In terms of assembly, homodimer. Interacts with corticotropin (ACTH). Interacts with MRAP; this interaction targets MC2R to the plasma membrane. Interacts with MRAP2; competing with MRAP for binding to MC2R and impairing the binding of corticotropin (ACTH). In terms of processing, ubiquitinated by MGRN1 that may be involved in post-endocytic trafficking and/or degradation of internalized receptor.

The protein resides in the cell membrane. Its function is as follows. Hormone receptor primarily expressed in adrenal cortex that plays a key role in regulating adrenocortical function. Upon corticotropin (ACTH) binding, facilitates the release of adrenal glucocorticoids, including cortisol and corticosterone. In addition, MC2R is required for fetal and neonatal adrenal gland development. Mechanistically, activates adenylate cyclase (cAMP), the MAPK cascade as well as the cAMP-dependent protein kinase A pathway leading to steroidogenic factor 1/NR5A1-mediated transcriptional activation. The chain is Adrenocorticotropic hormone receptor (MC2R) from Mesocricetus auratus (Golden hamster).